The following is a 138-amino-acid chain: 6,7-dimethyl-8-ribityllumazine synthase (138 aa).

Residues F13, 45–47 (VFD), and 69–71 (AVI) each bind 5-amino-6-(D-ribitylamino)uracil. 74–75 (AT) contributes to the (2S)-2-hydroxy-3-oxobutyl phosphate binding site. The active-site Proton donor is H77. L102 is a 5-amino-6-(D-ribitylamino)uracil binding site. Residue R117 coordinates (2S)-2-hydroxy-3-oxobutyl phosphate.

Belongs to the DMRL synthase family.

The enzyme catalyses (2S)-2-hydroxy-3-oxobutyl phosphate + 5-amino-6-(D-ribitylamino)uracil = 6,7-dimethyl-8-(1-D-ribityl)lumazine + phosphate + 2 H2O + H(+). Its pathway is cofactor biosynthesis; riboflavin biosynthesis; riboflavin from 2-hydroxy-3-oxobutyl phosphate and 5-amino-6-(D-ribitylamino)uracil: step 1/2. In terms of biological role, catalyzes the formation of 6,7-dimethyl-8-ribityllumazine by condensation of 5-amino-6-(D-ribitylamino)uracil with 3,4-dihydroxy-2-butanone 4-phosphate. This is the penultimate step in the biosynthesis of riboflavin. The sequence is that of 6,7-dimethyl-8-ribityllumazine synthase from Methanobrevibacter smithii (strain ATCC 35061 / DSM 861 / OCM 144 / PS).